The sequence spans 128 residues: Histone H2A type 1-J (128 aa).

Residues 1–22 (MSGRGKQGGKARAKAKTRSSRA) are disordered. Ser2 bears the N-acetylserine mark. Position 2 is a phosphoserine; by RPS6KA5 (Ser2). Arg4 bears the Citrulline; alternate mark. Residue Arg4 is modified to Symmetric dimethylarginine; by PRMT5; alternate. Lys6 carries the N6-(2-hydroxyisobutyryl)lysine modification. The span at 7–19 (QGGKARAKAKTRS) shows a compositional bias: basic residues. An N6-(2-hydroxyisobutyryl)lysine; alternate modification is found at Lys10. Lys10 and Lys14 each carry N6-(beta-hydroxybutyryl)lysine; alternate. Lys10 bears the N6-lactoyllysine; alternate mark. Lys10 carries the N6-succinyllysine; alternate modification. Lys14 is covalently cross-linked (Glycyl lysine isopeptide (Lys-Gly) (interchain with G-Cter in ubiquitin); alternate). Lys16 is covalently cross-linked (Glycyl lysine isopeptide (Lys-Gly) (interchain with G-Cter in ubiquitin)). Lys37 is subject to N6-(2-hydroxyisobutyryl)lysine; alternate. N6-(beta-hydroxybutyryl)lysine; alternate is present on Lys37. Lys37 carries the post-translational modification N6-crotonyllysine; alternate. An N6-(2-hydroxyisobutyryl)lysine mark is found at Lys75 and Lys76. At Lys96 the chain carries N6-(2-hydroxyisobutyryl)lysine; alternate. Position 96 is an N6-(beta-hydroxybutyryl)lysine; alternate (Lys96). N6-succinyllysine; alternate is present on Lys96. Residue Lys96 is modified to N6-glutaryllysine; alternate. Position 100 is an N6-glutaryllysine (Lys100). Gln105 is subject to N5-methylglutamine. Position 119 is an N6-(2-hydroxyisobutyryl)lysine; alternate (Lys119). Lys119 is modified (N6-(beta-hydroxybutyryl)lysine; alternate). 2 positions are modified to N6-crotonyllysine; alternate: Lys119 and Lys120. N6-glutaryllysine; alternate occurs at positions 119 and 120. Residue Lys120 forms a Glycyl lysine isopeptide (Lys-Gly) (interchain with G-Cter in ubiquitin); alternate linkage. The residue at position 121 (Thr121) is a Phosphothreonine; by DCAF1. The residue at position 126 (Lys126) is an N6-crotonyllysine; alternate. Lys126 is modified (N6-glutaryllysine; alternate).

The protein belongs to the histone H2A family. In terms of assembly, the nucleosome is a histone octamer containing two molecules each of H2A, H2B, H3 and H4 assembled in one H3-H4 heterotetramer and two H2A-H2B heterodimers. The octamer wraps approximately 147 bp of DNA. In terms of processing, deiminated on Arg-4 in granulocytes upon calcium entry. Monoubiquitination of Lys-120 (H2AK119Ub) by RING1, TRIM37 and RNF2/RING2 complex gives a specific tag for epigenetic transcriptional repression and participates in X chromosome inactivation of female mammals. It is involved in the initiation of both imprinted and random X inactivation. Ubiquitinated H2A is enriched in inactive X chromosome chromatin. Ubiquitination of H2A functions downstream of methylation of 'Lys-27' of histone H3 (H3K27me). H2AK119Ub by RNF2/RING2 can also be induced by ultraviolet and may be involved in DNA repair. Monoubiquitination of Lys-120 (H2AK119Ub) by TRIM37 may promote transformation of cells in a number of breast cancers. Following DNA double-strand breaks (DSBs), it is ubiquitinated through 'Lys-63' linkage of ubiquitin moieties by the E2 ligase UBE2N and the E3 ligases RNF8 and RNF168, leading to the recruitment of repair proteins to sites of DNA damage. Ubiquitination at Lys-14 and Lys-16 (H2AK13Ub and H2AK15Ub, respectively) in response to DNA damage is initiated by RNF168 that mediates monoubiquitination at these 2 sites, and 'Lys-63'-linked ubiquitin are then conjugated to monoubiquitin; RNF8 is able to extend 'Lys-63'-linked ubiquitin chains in vitro. Deubiquitinated by USP51 at Lys-14 and Lys-16 (H2AK13Ub and H2AK15Ub, respectively) after damaged DNA is repaired. H2AK119Ub and ionizing radiation-induced 'Lys-63'-linked ubiquitination (H2AK13Ub and H2AK15Ub) are distinct events. Post-translationally, phosphorylation on Ser-2 (H2AS1ph) is enhanced during mitosis. Phosphorylation on Ser-2 by RPS6KA5/MSK1 directly represses transcription. Acetylation of H3 inhibits Ser-2 phosphorylation by RPS6KA5/MSK1. Phosphorylation at Thr-121 (H2AT120ph) by DCAF1 is present in the regulatory region of many tumor suppresor genes and down-regulates their transcription. In terms of processing, glutamine methylation at Gln-105 (H2AQ104me) by FBL is specifically dedicated to polymerase I. It is present at 35S ribosomal DNA locus and impairs binding of the FACT complex. Symmetric dimethylation on Arg-4 by the PRDM1/PRMT5 complex may play a crucial role in the germ-cell lineage. Post-translationally, crotonylation (Kcr) is specifically present in male germ cells and marks testis-specific genes in post-meiotic cells, including X-linked genes that escape sex chromosome inactivation in haploid cells. Crotonylation marks active promoters and enhancers and confers resistance to transcriptional repressors. It is also associated with post-meiotically activated genes on autosomes. In terms of processing, lactylated in macrophages by EP300/P300 by using lactoyl-CoA directly derived from endogenous or exogenous lactate, leading to stimulates gene transcription.

It localises to the nucleus. It is found in the chromosome. Core component of nucleosome. Nucleosomes wrap and compact DNA into chromatin, limiting DNA accessibility to the cellular machineries which require DNA as a template. Histones thereby play a central role in transcription regulation, DNA repair, DNA replication and chromosomal stability. DNA accessibility is regulated via a complex set of post-translational modifications of histones, also called histone code, and nucleosome remodeling. This is Histone H2A type 1-J from Homo sapiens (Human).